Reading from the N-terminus, the 255-residue chain is Triosephosphate isomerase (255 aa).

Asparagine 9 to lysine 11 contacts substrate. Histidine 95 acts as the Electrophile in catalysis. Glutamate 167 acts as the Proton acceptor in catalysis. Substrate-binding positions include glycine 173, serine 212, and glycine 233 to glycine 234.

The protein belongs to the triosephosphate isomerase family. Homodimer.

It localises to the cytoplasm. It catalyses the reaction D-glyceraldehyde 3-phosphate = dihydroxyacetone phosphate. It functions in the pathway carbohydrate biosynthesis; gluconeogenesis. Its pathway is carbohydrate degradation; glycolysis; D-glyceraldehyde 3-phosphate from glycerone phosphate: step 1/1. Involved in the gluconeogenesis. Catalyzes stereospecifically the conversion of dihydroxyacetone phosphate (DHAP) to D-glyceraldehyde-3-phosphate (G3P). In Serratia proteamaculans (strain 568), this protein is Triosephosphate isomerase.